Here is a 100-residue protein sequence, read N- to C-terminus: uncharacterized protein (100 aa).

The span at 68–91 (EQYASGAGEKRKEQSSGNSRRKDP) shows a compositional bias: basic and acidic residues. The interval 68 to 100 (EQYASGAGEKRKEQSSGNSRRKDPSLYNWSDVK) is disordered.

This sequence belongs to the chlamydial CPn_0121/CT_031/TC_0300 family.

This is an uncharacterized protein from Chlamydia muridarum (strain MoPn / Nigg).